Reading from the N-terminus, the 1711-residue chain is Receptor-type tyrosine-protein phosphatase V (1711 aa).

A signal peptide spans Met1 to Leu17. Residues Ala18 to Ala1074 lie on the Extracellular side of the membrane. Fibronectin type-III domains lie at Pro37–Thr129, Val130–Asp222, Pro218–Tyr305, Pro306–Ser391, Ala393–Tyr470, Pro475–Thr569, Pro565–Thr654, Pro655–Glu749, Pro744–Val831, and Glu832–Ala926. N-linked (GlcNAc...) asparagine glycans are attached at residues Asn42, Asn74, Asn89, Asn117, Asn174, Asn239, and Asn259. The N-linked (GlcNAc...) asparagine glycan is linked to Asn431. N-linked (GlcNAc...) asparagine glycosylation is found at Asn570, Asn620, Asn649, Asn663, and Asn737. N-linked (GlcNAc...) asparagine glycans are attached at residues Asn851, Asn882, Asn970, and Asn982. Residues Ile1075–Val1095 form a helical membrane-spanning segment. At Leu1096–Cys1711 the chain is on the cytoplasmic side. Tyrosine-protein phosphatase domains follow at residues Phe1150 to Lys1409 and Asp1427 to Ala1696. Substrate is bound by residues Asp1316, Cys1350 to Arg1356, and Gln1394. Cys1350 functions as the Phosphocysteine intermediate in the catalytic mechanism.

The protein belongs to the protein-tyrosine phosphatase family. Receptor class 3 subfamily. The cytoplasmic domain contains potential phosphorylation sites. In terms of tissue distribution, bone and testis. In the latter, restricted to the basal portion of the seminiferous tubule.

The protein resides in the membrane. It catalyses the reaction O-phospho-L-tyrosyl-[protein] + H2O = L-tyrosyl-[protein] + phosphate. Functionally, protein tyrosine phosphatase that acts as a regulator of energy metabolism. Prevents decarboxylation of osteocalcin (Bglap) via an indirect mechanism, preventing the hormone activity of osteocalcin. Functions in signaling pathways during bone remodeling, as well as serve a broader role in cell interactions associated with differentiation in bone and testis. Associated with differentiation in bone and testis. This chain is Receptor-type tyrosine-protein phosphatase V (Ptprv), found in Rattus norvegicus (Rat).